The chain runs to 328 residues: Radiation response metalloprotease IrrE (328 aa).

Residues 1 to 31 (MPSANVSPPCPSGVRGGGMGPKAKAEASKPH) are disordered. Position 118 (H118) interacts with Zn(2+). E119 is a catalytic residue. The Zn(2+) site is built by H122 and E149. Disordered stretches follow at residues 217 to 238 (PREQ…LTVR) and 309 to 328 (RLGR…DAAQ).

Functionally, plays a central regulatory role in DNA repair and protection pathways in response to radiation stress. Acts as a site-specific metalloprotease that cleaves and inactivates the repressor protein DdrO, resulting in induced expression of genes required for DNA repair and cell survival after exposure to radiation. Regulates the expression of dozens of proteins from different pathways, including the important DNA repair proteins RecA and PprA. Binds to the promoters of recA and pprA. This chain is Radiation response metalloprotease IrrE, found in Deinococcus radiodurans (strain ATCC 13939 / DSM 20539 / JCM 16871 / CCUG 27074 / LMG 4051 / NBRC 15346 / NCIMB 9279 / VKM B-1422 / R1).